The sequence spans 308 residues: GMP synthase [glutamine-hydrolyzing] subunit B (308 aa).

A GMPS ATP-PPase domain is found at 1–185; it reads MNWEKFVEEK…LGLPEKIYNR (185 aa). Residue 28-34 coordinates ATP; that stretch reads SGGVDSS.

As to quaternary structure, heterodimer composed of a glutamine amidotransferase subunit (A) and a GMP-binding subunit (B).

The catalysed reaction is XMP + L-glutamine + ATP + H2O = GMP + L-glutamate + AMP + diphosphate + 2 H(+). It functions in the pathway purine metabolism; GMP biosynthesis; GMP from XMP (L-Gln route): step 1/1. Functionally, catalyzes the synthesis of GMP from XMP. In Pyrococcus abyssi (strain GE5 / Orsay), this protein is GMP synthase [glutamine-hydrolyzing] subunit B (guaAB).